The primary structure comprises 77 residues: DNA-directed RNA polymerase subunit omega (77 aa).

Belongs to the RNA polymerase subunit omega family. In terms of assembly, the RNAP catalytic core consists of 2 alpha, 1 beta, 1 beta' and 1 omega subunit. When a sigma factor is associated with the core the holoenzyme is formed, which can initiate transcription.

It catalyses the reaction RNA(n) + a ribonucleoside 5'-triphosphate = RNA(n+1) + diphosphate. Its function is as follows. Promotes RNA polymerase assembly. Latches the N- and C-terminal regions of the beta' subunit thereby facilitating its interaction with the beta and alpha subunits. The polypeptide is DNA-directed RNA polymerase subunit omega (Dichelobacter nodosus (strain VCS1703A)).